The primary structure comprises 543 residues: Tyrosine-protein kinase Yes (543 aa).

A compositionally biased stretch (basic and acidic residues) spans Met-1–Asn-20. The interval Met-1–Ser-45 is disordered. Gly-2 carries N-myristoyl glycine lipidation. Cys-3 carries the S-palmitoyl cysteine; in membrane form lipid modification. Position 21 is a phosphothreonine (Thr-21). Residue Tyr-32 is modified to Phosphotyrosine. Ser-40 carries the phosphoserine modification. Residues Gly-91 to Ser-152 form the SH3 domain. In terms of domain architecture, SH2 spans Trp-158 to Cys-255. Residues Leu-277–Phe-530 enclose the Protein kinase domain. ATP contacts are provided by residues Leu-283–Val-291 and Lys-305. Tyr-336 and Tyr-345 each carry phosphotyrosine. Asp-396 serves as the catalytic Proton acceptor. Tyr-426 bears the Phosphotyrosine; by autocatalysis mark. Tyr-446 carries the post-translational modification Phosphotyrosine. At Tyr-537 the chain carries Phosphotyrosine; by CSK.

This sequence belongs to the protein kinase superfamily. Tyr protein kinase family. SRC subfamily. Interacts with YAP1 and CSF1R. Interacts with CTNND1; this interaction allows YES1-mediated activation of FYN and FER and subsequent phosphorylation of CTNND1. Interacts with FASLG. Interacts with IL6ST/gp130. Interacts with SCRIB, when YES1 is in a closed conformation; the interaction facilitates YES1 autophosphorylation. Phosphorylated. Phosphorylation by CSK on the C-terminal tail maintains the enzyme in an inactive state. Autophosphorylation at Tyr-426 maintains enzyme activity by blocking CSK-mediated inhibition. In terms of processing, palmitoylation at Cys-3 promotes membrane localization. Expressed in the epithelial cells of renal proximal tubules and stomach as well as hematopoietic cells in the bone marrow and spleen in the fetal tissues. In adult, expressed in epithelial cells of the renal proximal tubules and present in keratinocytes in the basal epidermal layer of epidermis.

It is found in the cell membrane. The protein resides in the cytoplasm. It localises to the cytoskeleton. The protein localises to the microtubule organizing center. Its subcellular location is the centrosome. It is found in the cytosol. The protein resides in the cell junction. The catalysed reaction is L-tyrosyl-[protein] + ATP = O-phospho-L-tyrosyl-[protein] + ADP + H(+). In terms of biological role, non-receptor protein tyrosine kinase that is involved in the regulation of cell growth and survival, apoptosis, cell-cell adhesion, cytoskeleton remodeling, and differentiation. Stimulation by receptor tyrosine kinases (RTKs) including EGFR, PDGFR, CSF1R and FGFR leads to recruitment of YES1 to the phosphorylated receptor, and activation and phosphorylation of downstream substrates. Upon EGFR activation, promotes the phosphorylation of PARD3 to favor epithelial tight junction assembly. Participates in the phosphorylation of specific junctional components such as CTNND1 by stimulating the FYN and FER tyrosine kinases at cell-cell contacts. Upon T-cell stimulation by CXCL12, phosphorylates collapsin response mediator protein 2/DPYSL2 and induces T-cell migration. Participates in CD95L/FASLG signaling pathway and mediates AKT-mediated cell migration. Plays a role in cell cycle progression by phosphorylating the cyclin-dependent kinase 4/CDK4 thus regulating the G1 phase. Also involved in G2/M progression and cytokinesis. Catalyzes phosphorylation of organic cation transporter OCT2 which induces its transport activity. This Homo sapiens (Human) protein is Tyrosine-protein kinase Yes (YES1).